The following is a 417-amino-acid chain: Guanine nucleotide-exchange factor SEC12 (417 aa).

Topologically, residues 1 to 388 are cytoplasmic; it reads MGRRRGVELY…QLHLLPSRRS (388 aa). 3'-nitrotyrosine is present on Y10. Positions 101–135 are disordered; it reads KGSKAEKSGSKEQGPRQRKGAAPAEKKSGAEVHPE. Composition is skewed to basic and acidic residues over residues 103–115 and 124–135; these read SKAE…EQGP and AEKKSGAEVHPE. WD repeat units follow at residues 152-191, 194-232, and 298-337; these read STEP…KVLE, AHEG…TQLQ, and CGHE…RLYY. The chain crosses the membrane as a helical span at residues 389 to 409; the sequence is VPVWLLLLLCVGLIIVTILLL. At 410–417 the chain is on the lumenal side; that stretch reads QSAFPGFL.

Interacts with SAR1B (GDP-bound form). Interacts with MIA2; recruits PREB to endoplasmic reticulum exit sites. Interacts with CIDEB; facilitating loading of SCAP-SREBP into COPII vesicles.

The protein localises to the endoplasmic reticulum membrane. Its subcellular location is the nucleus. In terms of biological role, guanine nucleotide exchange factor (GEF) that regulates the assembly of the coat protein complex II/COPII in endoplasmic reticulum (ER) to Golgi vesicle-mediated transport. Selectively activates SAR1A and SAR1B by promoting the exchange of guanosine diphosphate (GDP) for guanosine triphosphate (GTP) in these small GTPases. In their activated GTP-bound state, SAR1A and SAR1B insert into the membrane of the endoplasmic reticulum where they recruit the remainder of the coat protein complex II/COPII which is responsible for both the sorting of proteins and the deformation and budding of membranes into vesicles destined to the Golgi. Was first identified based on its probable role in the regulation of pituitary gene transcription. Binds to the prolactin gene (PRL) promoter and seems to activate transcription. In Rattus norvegicus (Rat), this protein is Guanine nucleotide-exchange factor SEC12.